Reading from the N-terminus, the 348-residue chain is Protein RecA (348 aa).

66–73 serves as a coordination point for ATP; it reads GPESSGKT.

Belongs to the RecA family.

It is found in the cytoplasm. Functionally, can catalyze the hydrolysis of ATP in the presence of single-stranded DNA, the ATP-dependent uptake of single-stranded DNA by duplex DNA, and the ATP-dependent hybridization of homologous single-stranded DNAs. It interacts with LexA causing its activation and leading to its autocatalytic cleavage. This is Protein RecA from Legionella pneumophila (strain Lens).